Here is a 438-residue protein sequence, read N- to C-terminus: Chromosomal replication initiator protein DnaA (438 aa).

Positions 1–71 (MTTKEFLTII…CFEIYDGSKP (71 aa)) are domain I, interacts with DnaA modulators. Residues 71–100 (PTIEIKLSNEKKSKKEILKEQTQNESTEST) are domain II. The interval 101–315 (ILNPSYTFDS…GVLIRINASA (215 aa)) is domain III, AAA+ region. ATP-binding residues include Gly-145, Gly-147, Lys-148, and Thr-149. Positions 316–438 (SLLNQEITLP…LKNKIINSRE (123 aa)) are domain IV, binds dsDNA.

It belongs to the DnaA family. Oligomerizes as a right-handed, spiral filament on DNA at oriC.

It is found in the cytoplasm. Functionally, plays an essential role in the initiation and regulation of chromosomal replication. ATP-DnaA binds to the origin of replication (oriC) to initiate formation of the DNA replication initiation complex once per cell cycle. Binds the DnaA box (a 9 base pair repeat at the origin) and separates the double-stranded (ds)DNA. Forms a right-handed helical filament on oriC DNA; dsDNA binds to the exterior of the filament while single-stranded (ss)DNA is stabiized in the filament's interior. The ATP-DnaA-oriC complex binds and stabilizes one strand of the AT-rich DNA unwinding element (DUE), permitting loading of DNA polymerase. After initiation quickly degrades to an ADP-DnaA complex that is not apt for DNA replication. Binds acidic phospholipids. The protein is Chromosomal replication initiator protein DnaA of Aliarcobacter butzleri (strain RM4018) (Arcobacter butzleri).